We begin with the raw amino-acid sequence, 330 residues long: ADP-L-glycero-D-manno-heptose-6-epimerase (330 aa).

NADP(+) is bound by residues 11-12 (FI), 32-33 (DN), lysine 39, lysine 54, 75-79 (EGACS), and asparagine 92. The active-site Proton acceptor is the tyrosine 139. Position 143 (lysine 143) interacts with NADP(+). A substrate-binding site is contributed by asparagine 168. NADP(+)-binding residues include valine 169 and lysine 177. Lysine 177 acts as the Proton acceptor in catalysis. Substrate-binding positions include arginine 179, histidine 186, 200-203 (FGEY), arginine 213, and tyrosine 292.

This sequence belongs to the NAD(P)-dependent epimerase/dehydratase family. HldD subfamily. Homopentamer. NADP(+) is required as a cofactor.

It carries out the reaction ADP-D-glycero-beta-D-manno-heptose = ADP-L-glycero-beta-D-manno-heptose. It functions in the pathway nucleotide-sugar biosynthesis; ADP-L-glycero-beta-D-manno-heptose biosynthesis; ADP-L-glycero-beta-D-manno-heptose from D-glycero-beta-D-manno-heptose 7-phosphate: step 4/4. Catalyzes the interconversion between ADP-D-glycero-beta-D-manno-heptose and ADP-L-glycero-beta-D-manno-heptose via an epimerization at carbon 6 of the heptose. This chain is ADP-L-glycero-D-manno-heptose-6-epimerase, found in Burkholderia ambifaria (strain MC40-6).